Reading from the N-terminus, the 180-residue chain is Ribulose bisphosphate carboxylase small subunit, chloroplastic 1 (180 aa).

A chloroplast-targeting transit peptide spans 1 to 56 (MASSVLSSAAVATRSNVAQANMVAPFTGLKSAASFPVSRKQNLDITSIASNGGRVQ).

Belongs to the RuBisCO small chain family. As to quaternary structure, heterohexadecamer of 8 large and 8 small subunits.

The protein resides in the plastid. Its subcellular location is the chloroplast. In terms of biological role, ruBisCO catalyzes two reactions: the carboxylation of D-ribulose 1,5-bisphosphate, the primary event in carbon dioxide fixation, as well as the oxidative fragmentation of the pentose substrate. Both reactions occur simultaneously and in competition at the same active site. Although the small subunit is not catalytic it is essential for maximal activity. In Nicotiana sylvestris (Wood tobacco), this protein is Ribulose bisphosphate carboxylase small subunit, chloroplastic 1.